The chain runs to 216 residues: Small ribosomal subunit protein uS3c (216 aa).

Residues 43-118 (IKNYIQKNIR…KLNIAIVKIT (76 aa)) form the KH type-2 domain.

The protein belongs to the universal ribosomal protein uS3 family. Part of the 30S ribosomal subunit.

It localises to the plastid. The protein localises to the chloroplast. In Phaseolus vulgaris (Kidney bean), this protein is Small ribosomal subunit protein uS3c (rps3).